The chain runs to 320 residues: MPVLGPERRLLASLSSAPPAAPRLGLAANQTNQTGPQCLEVSIPDGLFLSLGLVSLVENVLVVAAIAKNRNLHSPMYYFVCCLAVSDLLVSVSNVLETAVLLLLEAGALAAQAAVVQQLDNVMDVLICGSMVSSLCFLGAIAVDRYVSIFYALRYHSIVTLPRAGRAIAAIWAGSVLSSTLFIAYYHHTAVLLGLVSFFVAMLALMAVLYVHMLARACQHGRHIARLHKTQHPTRQGCGLKGAATLTILLGVFLLCWAPFFLHLSLVVLCPQHPTCGCVFKNVNLFLALVICNSIVDPLIYAFRSQELRKTLQEVLQCSW.

Over 1 to 40 (MPVLGPERRLLASLSSAPPAAPRLGLAANQTNQTGPQCLE) the chain is Extracellular. An N-linked (GlcNAc...) asparagine glycan is attached at N32. Residues 41–66 (VSIPDGLFLSLGLVSLVENVLVVAAI) traverse the membrane as a helical segment. At 67–75 (AKNRNLHSP) the chain is on the cytoplasmic side. A helical transmembrane segment spans residues 76–96 (MYYFVCCLAVSDLLVSVSNVL). Residues 97-121 (ETAVLLLLEAGALAAQAAVVQQLDN) are Extracellular-facing. A helical membrane pass occupies residues 122–143 (VMDVLICGSMVSSLCFLGAIAV). The Cytoplasmic segment spans residues 144–166 (DRYVSIFYALRYHSIVTLPRAGR). The chain crosses the membrane as a helical span at residues 167-186 (AIAAIWAGSVLSSTLFIAYY). Residues 187–194 (HHTAVLLG) are Extracellular-facing. Residues 195 to 214 (LVSFFVAMLALMAVLYVHML) traverse the membrane as a helical segment. Over 215–243 (ARACQHGRHIARLHKTQHPTRQGCGLKGA) the chain is Cytoplasmic. The chain crosses the membrane as a helical span at residues 244–269 (ATLTILLGVFLLCWAPFFLHLSLVVL). The Extracellular portion of the chain corresponds to 270–282 (CPQHPTCGCVFKN). The helical transmembrane segment at 283–303 (VNLFLALVICNSIVDPLIYAF) threads the bilayer. Residues 304–320 (RSQELRKTLQEVLQCSW) are Cytoplasmic-facing.

It belongs to the G-protein coupled receptor 1 family. Interacts with MGRN1, but does not undergo MGRN1-mediated ubiquitination; this interaction competes with GNAS-binding and thus inhibits agonist-induced cAMP production. Interacts with OPN3; the interaction results in a decrease in MC1R-mediated cAMP signaling and ultimately a decrease in melanin production in melanocytes.

Its subcellular location is the cell membrane. Its function is as follows. Receptor for MSH (alpha, beta and gamma) and ACTH. The activity of this receptor is mediated by G proteins which activate adenylate cyclase. Mediates melanogenesis, the production of eumelanin (black/brown) and phaeomelanin (red/yellow), via regulation of cAMP signaling in melanocytes. This chain is Melanocyte-stimulating hormone receptor (MC1R), found in Sus scrofa (Pig).